A 598-amino-acid polypeptide reads, in one-letter code: UvrABC system protein C (598 aa).

In terms of domain architecture, GIY-YIG spans 14-91 (DSPGCYLHKD…IQKNMPKYNI (78 aa)). The UVR domain maps to 196-231 (DKIIEDLRSKMLAASEEMAFERAAEYRDLISGIATM).

It belongs to the UvrC family. In terms of assembly, interacts with UvrB in an incision complex.

The protein localises to the cytoplasm. Functionally, the UvrABC repair system catalyzes the recognition and processing of DNA lesions. UvrC both incises the 5' and 3' sides of the lesion. The N-terminal half is responsible for the 3' incision and the C-terminal half is responsible for the 5' incision. The sequence is that of UvrABC system protein C from Streptococcus pyogenes serotype M12 (strain MGAS2096).